The following is a 535-amino-acid chain: Phosphoenolpyruvate carboxykinase (ATP) (535 aa).

The substrate site is built by Arg59, Tyr201, and Lys207. ATP is bound by residues Lys207, His226, and 243 to 251 (GLSGTGKTT). Mn(2+) contacts are provided by Lys207 and His226. Asp264 lines the Mn(2+) pocket. ATP-binding positions include Glu292, Arg328, 444-445 (RI), and Thr450. Arg328 lines the substrate pocket.

Belongs to the phosphoenolpyruvate carboxykinase (ATP) family. Requires Mn(2+) as cofactor.

It is found in the cytoplasm. It catalyses the reaction oxaloacetate + ATP = phosphoenolpyruvate + ADP + CO2. It participates in carbohydrate biosynthesis; gluconeogenesis. Its function is as follows. Involved in the gluconeogenesis. Catalyzes the conversion of oxaloacetate (OAA) to phosphoenolpyruvate (PEP) through direct phosphoryl transfer between the nucleoside triphosphate and OAA. This chain is Phosphoenolpyruvate carboxykinase (ATP), found in Porphyromonas gingivalis (strain ATCC BAA-308 / W83).